The following is a 548-amino-acid chain: Probable delta-1-pyrroline-5-carboxylate dehydrogenase (548 aa).

The Proton acceptor role is filled by Glu-298. The active-site Nucleophile is the Cys-332. Phosphoserine is present on residues Ser-391, Ser-394, and Ser-396.

This sequence belongs to the aldehyde dehydrogenase family.

The catalysed reaction is L-glutamate 5-semialdehyde + NAD(+) + H2O = L-glutamate + NADH + 2 H(+). It functions in the pathway amino-acid degradation; L-proline degradation into L-glutamate; L-glutamate from L-proline: step 2/2. This is Probable delta-1-pyrroline-5-carboxylate dehydrogenase from Schizosaccharomyces pombe (strain 972 / ATCC 24843) (Fission yeast).